Here is a 473-residue protein sequence, read N- to C-terminus: 6-phosphogluconate dehydrogenase, decarboxylating (473 aa).

Residues 10–15, 33–35, 74–76, and asparagine 102 each bind NADP(+); these read GMAVMG, NRT, and VKS. Residues asparagine 102 and 128-130 each bind substrate; that span reads SGG. Residue lysine 182 is the Proton acceptor of the active site. 185–186 contacts substrate; sequence HN. The active-site Proton donor is the glutamate 189. Substrate contacts are provided by tyrosine 190, lysine 260, arginine 287, arginine 446, and histidine 452.

Belongs to the 6-phosphogluconate dehydrogenase family. Homodimer.

The enzyme catalyses 6-phospho-D-gluconate + NADP(+) = D-ribulose 5-phosphate + CO2 + NADPH. It functions in the pathway carbohydrate degradation; pentose phosphate pathway; D-ribulose 5-phosphate from D-glucose 6-phosphate (oxidative stage): step 3/3. Functionally, catalyzes the oxidative decarboxylation of 6-phosphogluconate to ribulose 5-phosphate and CO(2), with concomitant reduction of NADP to NADPH. The polypeptide is 6-phosphogluconate dehydrogenase, decarboxylating (gnd) (Buchnera aphidicola subsp. Schizaphis graminum (strain Sg)).